The sequence spans 418 residues: tRNA-2-methylthio-N(6)-dimethylallyladenosine synthase (418 aa).

One can recognise an MTTase N-terminal domain in the interval 2 to 118; that stretch reads PGYYLWTIGC…WREIPEGFIL (117 aa). Residues cysteine 11, cysteine 47, cysteine 81, cysteine 134, cysteine 138, and cysteine 141 each contribute to the [4Fe-4S] cluster site. Positions 120–351 constitute a Radical SAM core domain; it reads LRPPVSANVT…EDLQKETVGK (232 aa). Residues 346 to 414 form the TRAM domain; sequence KETVGKANAA…PWSLQAKLVN (69 aa).

This sequence belongs to the methylthiotransferase family. MiaB subfamily. In terms of assembly, monomer. The cofactor is [4Fe-4S] cluster.

The protein resides in the cytoplasm. The enzyme catalyses N(6)-dimethylallyladenosine(37) in tRNA + (sulfur carrier)-SH + AH2 + 2 S-adenosyl-L-methionine = 2-methylsulfanyl-N(6)-dimethylallyladenosine(37) in tRNA + (sulfur carrier)-H + 5'-deoxyadenosine + L-methionine + A + S-adenosyl-L-homocysteine + 2 H(+). In terms of biological role, catalyzes the methylthiolation of N6-(dimethylallyl)adenosine (i(6)A), leading to the formation of 2-methylthio-N6-(dimethylallyl)adenosine (ms(2)i(6)A) at position 37 in tRNAs that read codons beginning with uridine. This is tRNA-2-methylthio-N(6)-dimethylallyladenosine synthase from Dehalococcoides mccartyi (strain CBDB1).